The primary structure comprises 601 residues: 3-hydroxy-3-methylglutaryl-coenzyme A reductase (601 aa).

The tract at residues 1–34 (MDSRRRSPTVTAKAAAGELPLAPHEGQNQQPSIP) is disordered. Transmembrane regions (helical) follow at residues 36 to 58 (SSDV…FFSV) and 86 to 106 (ALAS…LDFV). Positions 107 to 179 (QSLIYKPNNE…PLITPQNSEE (73 aa)) are linker. The segment at 180–601 (DEDIIKAVVA…IASSQLESDS (422 aa)) is catalytic. Glu273 serves as the catalytic Charge relay system. N-linked (GlcNAc...) asparagine glycosylation occurs at Asn337. Catalysis depends on charge relay system residues Lys405 and Asp481. Catalysis depends on His579, which acts as the Proton donor. A glycan (N-linked (GlcNAc...) asparagine) is linked at Asn583.

Belongs to the HMG-CoA reductase family.

The protein resides in the endoplasmic reticulum membrane. It catalyses the reaction (R)-mevalonate + 2 NADP(+) + CoA = (3S)-3-hydroxy-3-methylglutaryl-CoA + 2 NADPH + 2 H(+). It functions in the pathway metabolic intermediate biosynthesis; (R)-mevalonate biosynthesis; (R)-mevalonate from acetyl-CoA: step 3/3. Its function is as follows. Catalyzes the synthesis of mevalonate. The specific precursor of all isoprenoid compounds present in plants. This Catharanthus roseus (Madagascar periwinkle) protein is 3-hydroxy-3-methylglutaryl-coenzyme A reductase (HMGR).